Reading from the N-terminus, the 336-residue chain is Flavonol synthase/flavanone 3-hydroxylase (336 aa).

Positions Glu-99–Lys-118 are disordered. A Fe2OG dioxygenase domain is found at Met-196–Pro-296. A 2-oxoglutarate-binding site is contributed by Asn-204–Tyr-206. 3 residues coordinate Fe cation: His-221, Asp-223, and His-277. Position 287–289 (Arg-287–Ser-289) interacts with 2-oxoglutarate.

It belongs to the iron/ascorbate-dependent oxidoreductase family. The cofactor is L-ascorbate. It depends on Fe(2+) as a cofactor. As to expression, expressed in young seedlings (at protein level). Expressed in roots, emerging leaves, shoot-root transition zone, trichomes, flowers and siliques. In cotyledons, expressed mostly on the adaxial side and only in guard cells on the abaxial side.

It is found in the cytoplasm. The protein resides in the nucleus. The catalysed reaction is a (2R,3R)-dihydroflavonol + 2-oxoglutarate + O2 = a flavonol + succinate + CO2 + H2O. It catalyses the reaction a (2S)-flavan-4-one + 2-oxoglutarate + O2 = a (2R,3R)-dihydroflavonol + succinate + CO2. It participates in secondary metabolite biosynthesis; flavonoid biosynthesis. In terms of biological role, catalyzes the formation of flavonols from dihydroflavonols. It can act on dihydrokaempferol to produce kaempferol, on dihydroquercetin to produce quercitin and on dihydromyricetin to produce myricetin. In vitro catalyzes the oxidation of both enantiomers of naringenin to give both cis- and trans-dihydrokaempferol. This is Flavonol synthase/flavanone 3-hydroxylase (FLS1) from Arabidopsis thaliana (Mouse-ear cress).